We begin with the raw amino-acid sequence, 336 residues long: Atypical chemokine receptor 1 (336 aa).

The Extracellular segment spans residues 1 to 63 (MGNCLHQAEL…CSLLNDSSLP (63 aa)). N-linked (GlcNAc...) asparagine glycosylation is found at Asn-16, Asn-27, Asn-33, and Asn-58. Intrachain disulfides connect Cys-51-Cys-276 and Cys-129-Cys-195. Residues 64–84 (FFILASDLGILASSTVLFMLF) form a helical membrane-spanning segment. Over 85 to 95 (RPLFRWQLCPG) the chain is Cytoplasmic. A helical transmembrane segment spans residues 96–116 (WPVLAQLAVGSALFSIVVPIL). At 117-129 (APGLGNTHSSALC) the chain is on the extracellular side. Residues 130–153 (SLGYCVWYGSAFAQALLLGCHASL) form a helical membrane-spanning segment. The Cytoplasmic segment spans residues 154-166 (GPKLGAGQVPGLT). A helical membrane pass occupies residues 167-187 (LGLPVGLWGATALLTLPITLA). Over 188 to 207 (SGASDGLCTPIYSTELEALQ) the chain is Extracellular. The chain crosses the membrane as a helical span at residues 208 to 228 (ATHAVACFAIFVLLPLGLFGA). Over 229-244 (KGLKKALGMGPGPWMN) the chain is Cytoplasmic. Residues 245–265 (ILWVWFIFWWPHGLVLGLDFL) form a helical membrane-spanning segment. Over 266–287 (VGSKLSLLPTCLAQQVLDLLLN) the chain is Extracellular. Residues 288-308 (LAEALAIVHCVATPLLLALFC) traverse the membrane as a helical segment. The Cytoplasmic segment spans residues 309-336 (HQTTRTLLPSLPLPERWSSPVDTLGSKS).

The protein belongs to the G-protein coupled receptor 1 family. Atypical chemokine receptor subfamily.

It is found in the early endosome. The protein localises to the recycling endosome. Its subcellular location is the membrane. Functionally, atypical chemokine receptor that controls chemokine levels and localization via high-affinity chemokine binding that is uncoupled from classic ligand-driven signal transduction cascades, resulting instead in chemokine sequestration, degradation, or transcytosis. Also known as interceptor (internalizing receptor) or chemokine-scavenging receptor or chemokine decoy receptor. Has a promiscuous chemokine-binding profile, interacting with inflammatory chemokines of both the CXC and the CC subfamilies but not with homeostatic chemokines. Acts as a receptor for chemokines including CCL2, CCL5, CCL7, CCL11, CCL13, CCL14, CCL17, CXCL5, CXCL6, IL8/CXCL8, CXCL11, GRO, RANTES, MCP-1 and TARC. May regulate chemokine bioavailability and, consequently, leukocyte recruitment through two distinct mechanisms: when expressed in endothelial cells, it sustains the abluminal to luminal transcytosis of tissue-derived chemokines and their subsequent presentation to circulating leukocytes; when expressed in erythrocytes, serves as blood reservoir of cognate chemokines but also as a chemokine sink, buffering potential surges in plasma chemokine levels. This is Atypical chemokine receptor 1 (ACKR1) from Saimiri boliviensis boliviensis (Bolivian squirrel monkey).